Here is a 556-residue protein sequence, read N- to C-terminus: Urocanate hydratase (556 aa).

NAD(+) contacts are provided by residues 52–53 (GG), Gln-130, 176–178 (GMG), Glu-196, Arg-201, 242–243 (NA), 263–267 (QTSAH), 273–274 (YL), and Tyr-322. Cys-410 is an active-site residue. Residue Gly-492 participates in NAD(+) binding.

It belongs to the urocanase family. Requires NAD(+) as cofactor.

The protein resides in the cytoplasm. The enzyme catalyses 4-imidazolone-5-propanoate = trans-urocanate + H2O. Its pathway is amino-acid degradation; L-histidine degradation into L-glutamate; N-formimidoyl-L-glutamate from L-histidine: step 2/3. Catalyzes the conversion of urocanate to 4-imidazolone-5-propionate. The polypeptide is Urocanate hydratase (Shewanella oneidensis (strain ATCC 700550 / JCM 31522 / CIP 106686 / LMG 19005 / NCIMB 14063 / MR-1)).